The chain runs to 55 residues: Large ribosomal subunit protein uL15 (55 aa).

The protein belongs to the universal ribosomal protein uL15 family. As to quaternary structure, part of the 50S ribosomal subunit.

Binds to the 23S rRNA. In Lactococcus lactis subsp. cremoris (Streptococcus cremoris), this protein is Large ribosomal subunit protein uL15 (rplO).